The primary structure comprises 371 residues: Putrescine N-methyltransferase 2 (371 aa).

Composition is skewed to polar residues over residues 1–14 (MEVISTNTNGSTIF) and 23–70 (GHQN…HDNG). Residues 1–70 (MEVISTNTNG…QNGTISHDNG (70 aa)) are disordered. The region spanning 82 to 319 (PGWFSEFSAL…GVIGYMLCST (238 aa)) is the PABS domain. S-adenosyl-L-methionine contacts are provided by residues Gln113, Glu188, and 219 to 220 (DG). The Proton acceptor role is filled by Asp238. Tyr307 contacts S-adenosyl-L-methionine.

This sequence belongs to the class I-like SAM-binding methyltransferase superfamily. Spermidine/spermine synthase family. Mainly expressed in roots.

The enzyme catalyses putrescine + S-adenosyl-L-methionine = N-methylputrescine + S-adenosyl-L-homocysteine + H(+). The protein operates within alkaloid biosynthesis; nicotine biosynthesis. Its function is as follows. Involved in the biosynthesis of pyridine alkaloid natural products, leading mainly to the production of anabasine, anatabine, nicotine and nornicotine, effective deterrents against herbivores with antiparasitic and pesticide properties (neurotoxins); nornicotine serves as the precursor in the synthesis of the carcinogen compound N'-nitrosonornicotine (NNN). Methyltransferase that mediates the conversion of putrescine to N-methylputrescine. The protein is Putrescine N-methyltransferase 2 of Nicotiana attenuata (Coyote tobacco).